Consider the following 132-residue polypeptide: Ribonuclease P protein component (132 aa).

Belongs to the RnpA family. In terms of assembly, consists of a catalytic RNA component (M1 or rnpB) and a protein subunit.

The catalysed reaction is Endonucleolytic cleavage of RNA, removing 5'-extranucleotides from tRNA precursor.. Its function is as follows. RNaseP catalyzes the removal of the 5'-leader sequence from pre-tRNA to produce the mature 5'-terminus. It can also cleave other RNA substrates such as 4.5S RNA. The protein component plays an auxiliary but essential role in vivo by binding to the 5'-leader sequence and broadening the substrate specificity of the ribozyme. This chain is Ribonuclease P protein component, found in Marinomonas sp. (strain MWYL1).